Consider the following 127-residue polypeptide: MRHQKSGRKFNRTSAHREAMFRNMAASLFKHELIKTTLPKAKELRRVAEPLITIGKVDGVANRRLAFARLRDKEAVGKLFVELGPRYATRPGGYLRILKAGFRAGDNAPMAYVELVDRPVVAEEVSE.

The protein belongs to the bacterial ribosomal protein bL17 family. Part of the 50S ribosomal subunit. Contacts protein L32.

In Xanthomonas campestris pv. campestris (strain 8004), this protein is Large ribosomal subunit protein bL17.